Reading from the N-terminus, the 1489-residue chain is Sex-determining transformer protein 2 (1489 aa).

A signal peptide spans 1–33 (MKLAFNKLLVASVVFTVLSFGLLLASLFTTTAT). A run of 11 helical transmembrane segments spans residues 454 to 474 (MIYF…AFAF), 489 to 509 (GFIT…ILID), 513 to 533 (LCYI…VTFI), 600 to 620 (YWFL…FFID), 622 to 642 (DVQK…FEEM), 749 to 769 (AVVV…LLFI), 931 to 951 (IFAA…FSIG), 958 to 978 (LAFA…VSLF), 986 to 1006 (YTNV…CDLA), 1041 to 1061 (VQIF…TAII), and 1066 to 1086 (AFFI…FNSL). Residues 1138-1288 (EFSIRPTENT…EQQEVTDDVA (151 aa)) are interaction with fem-3. Disordered regions lie at residues 1143 to 1176 (PTEN…DPSM), 1233 to 1393 (LLRQ…YPPS), and 1412 to 1489 (RNLP…TPGL). Basic and acidic residues-rich tracts occupy residues 1275 to 1298 (DPAK…EVRK), 1326 to 1340 (VSRE…REPR), and 1423 to 1433 (RPRDWDQRRLV). Residues 1402-1423 (CEDVYWKYNERNLPDNVPMPPR) are MX regulatory domain; required for tra-1 binding. Residues 1444-1456 (VPPPGRSAIPIPP) are compositionally biased toward pro residues. Over residues 1460-1482 (RLRERRREQHLREQEARRNRPES) the composition is skewed to basic and acidic residues.

In terms of assembly, interacts with tra-1 and fem-3.

The protein localises to the membrane. Plays a major role in controlling sexual cell fates. Promotes female development in XX animals where it sequesters one or more of the FEM proteins to the membrane thereby freeing the tra-1 protein (a putative transcription factor) to enter the nucleus and promote female development. In XO animals it acts as a receptor for her-1 which prevents it from binding to FEM proteins thereby repressing the activity of tra-1. Negatively regulates male development when bound to fem-3 and is required together with tra-1 for promoting spermatogenesis. Also required for feminizing tra-3 activity. This is Sex-determining transformer protein 2 from Caenorhabditis briggsae.